Consider the following 1520-residue polypeptide: Myosin-5 (1520 aa).

One can recognise a Myosin N-terminal SH3-like domain in the interval 7–56 (IVGSHVWVEDPHLAWIDGEVTRIDGINVHVKTKKGKTVVTNVYFPKDTEA). A Myosin motor domain is found at 59–729 (GGVDDMTKLS…QMAELDARRA (671 aa)). ATP contacts are provided by residues 153–160 (GESGAGKT) and 206–214 (NNNSSRFGK). Actin-binding regions lie at residues 492-526 (LIEKKPGGIISLLDEACMFPKSTHETFSQKLFQTF), 528-551 (EHERFAKPKLSRTDFTISHYAGEV), 586-610 (FHALHEDSSRSSKFSSIGSRFKQQL), and 610-632 (LHSLMESLNGTEPHYIRCIKPNN). 6 IQ domains span residues 732 to 761 (LGNAARVIQRQFRTCMARKNYRSIRNAAIV), 755 to 784 (IRNAAIVLQSFLRGEIARAVHKKLRIEAAA), 780 to 809 (IEAAALRVQKNFRRYVDRKSFVTTRSSTIV), 803 to 832 (TRSSTIVLQTGLRAMIARSEFRLRRQRKAA), 828 to 857 (QRKAAIVLQAHWRGRQAFSYYTRLQKAAIV), and 851 to 880 (LQKAAIVTQCAWRCRLARRELRMLKMAARD). A coiled-coil region spans residues 881-1047 (TGALKDAKNK…ESENKVLRQQ (167 aa)). The tract at residues 1062-1100 (PKTTIIQRTPEKDTFSNGETTQLQEPETEDRPQKSLNQK) is disordered. Over residues 1076-1086 (FSNGETTQLQE) the composition is skewed to polar residues. The region spanning 1148–1463 (NRIIETIASA…IATMRAEVSD (316 aa)) is the Dilute domain.

This sequence belongs to the TRAFAC class myosin-kinesin ATPase superfamily. Myosin family. Plant myosin class XI subfamily. In terms of assembly, homodimer. Interacts with MYOB1 and MYOB2. Interacts with PHOX1.

It is found in the cytoplasm. Functionally, myosin heavy chain that is required for the cell cycle-regulated transport of various organelles and proteins for their segregation. Functions by binding with its tail domain to receptor proteins on organelles and exerting force with its N-terminal motor domain against actin filaments, thereby transporting its cargo along polarized actin cables. Contributes to the trafficking of Golgi stacks, mitochondria and peroxisomes. Required for development of pavement cells, trichomes, and stigmatic papillae. This is Myosin-5 (XI-1) from Arabidopsis thaliana (Mouse-ear cress).